The chain runs to 253 residues: Probable transcriptional regulatory protein syc0529_d (253 aa).

It belongs to the TACO1 family.

It localises to the cytoplasm. In Synechococcus sp. (strain ATCC 27144 / PCC 6301 / SAUG 1402/1) (Anacystis nidulans), this protein is Probable transcriptional regulatory protein syc0529_d.